Here is a 100-residue protein sequence, read N- to C-terminus: Urease subunit gamma (100 aa).

It belongs to the urease gamma subunit family. In terms of assembly, heterotrimer of UreA (gamma), UreB (beta) and UreC (alpha) subunits. Three heterotrimers associate to form the active enzyme.

Its subcellular location is the cytoplasm. It carries out the reaction urea + 2 H2O + H(+) = hydrogencarbonate + 2 NH4(+). Its pathway is nitrogen metabolism; urea degradation; CO(2) and NH(3) from urea (urease route): step 1/1. This chain is Urease subunit gamma, found in Pseudomonas syringae pv. syringae (strain B728a).